The sequence spans 1969 residues: TP53-binding protein 1 (1969 aa).

The interval 1–24 (MPGEQMDPTGSQLDSDFSQQDTPC) is disordered. Polar residues predominate over residues 8–22 (PTGSQLDSDFSQQDT). Phosphoserine occurs at positions 30, 68, and 73. Residues 67-168 (VSNPEQSAVE…DSLAAEDSAS (102 aa)) are disordered. Polar residues predominate over residues 69–85 (NPEQSAVEQGDSNSSFN). The span at 86-95 (EHLKEKKASD) shows a compositional bias: basic and acidic residues. Residues 101 to 110 (HLGTSGSISQ) are compositionally biased toward polar residues. Phosphoserine is present on S109. Positions 135 to 148 (PEEEKEEEELEEEK) are enriched in acidic residues. Over residues 158–168 (ADSLAAEDSAS) the composition is skewed to low complexity. Phosphoserine occurs at positions 169, 179, and 181. K220 participates in a covalent cross-link: Glycyl lysine isopeptide (Lys-Gly) (interchain with G-Cter in SUMO1); alternate. A Glycyl lysine isopeptide (Lys-Gly) (interchain with G-Cter in SUMO2); alternate cross-link involves residue K220. 3 disordered regions span residues 254–337 (EQNL…VSTP), 352–599 (LVQE…CKGR), and 614–707 (DSGS…CPEA). 2 positions are modified to phosphoserine: S267 and S268. Over residues 277 to 288 (ETKEQVPARELL) the composition is skewed to basic and acidic residues. Over residues 294 to 324 (VQPSSEPEVSSTQEDLFDQSSKTASDGCSTP) the composition is skewed to polar residues. S297 carries the phosphoserine modification. T305 is subject to Phosphothreonine. Residues S368, S382, and S397 each carry the phosphoserine modification. Residues 407–419 (QKLHDDEAMETEK) show a composition bias toward basic and acidic residues. The segment covering 426–442 (PAVSPQASTPVSRSTPV) has biased composition (polar residues). Residues S429, S452, and S464 each carry the phosphoserine modification. A compositionally biased stretch (polar residues) spans 481–490 (HSSSLTVECS). A compositionally biased stretch (basic and acidic residues) spans 491–501 (KTSESEPKNFT). A phosphoserine mark is found at S507, S518, S523, and S525. Residues 517-528 (LSTSEYSQSSKM) show a composition bias toward polar residues. 2 positions are modified to phosphothreonine: T543 and T548. Phosphoserine is present on residues S552 and S579. Over residues 566–582 (VLVTPSQDDQVEMSQNV) the composition is skewed to polar residues. Positions 583–599 (DKAKEDETEDRGDCKGR) are enriched in basic and acidic residues. Positions 614–634 (DSGSQAVPSPATRSEALSSVL) are enriched in polar residues. Phosphoserine occurs at positions 622, 627, 631, and 632. Residues 640 to 649 (MDTKEHHPEE) are compositionally biased toward basic and acidic residues. The residue at position 662 (T662) is a Phosphothreonine. Basic and acidic residues predominate over residues 666–675 (SHREEPKEEP). Phosphoserine is present on residues S684, S716, S719, and S763. The interval 754–870 (KEPSPRADVS…DDKQLGPEGA (117 aa)) is disordered. Residues 790–818 (AENRLDTPEEKRIECDGDSKAETTEKDAV) show a composition bias toward basic and acidic residues. A Phosphoserine modification is found at S822. Over residues 830–839 (VRDEPVRPDQ) the composition is skewed to basic and acidic residues. At T912 the chain carries Phosphothreonine. Residue K920 forms a Glycyl lysine isopeptide (Lys-Gly) (interchain with G-Cter in SUMO2) linkage. Positions 927–1017 (STPIGISNYP…GSTAIAEPVA (91 aa)) are disordered. A compositionally biased stretch (polar residues) spans 935 to 949 (YPESTIATSDVTSES). Residues 961 to 975 (EKGDSESAPEMDGKL) show a composition bias toward basic and acidic residues. S965 carries the post-translational modification Phosphoserine. Residue K974 forms a Glycyl lysine isopeptide (Lys-Gly) (interchain with G-Cter in SUMO2) linkage. The residue at position 1018 (S1018) is a Phosphoserine. 3 disordered regions span residues 1034–1144 (QEKE…MDRP), 1178–1231 (GTST…PHGH), and 1267–1478 (TEET…DSSS). Positions 1060–1074 (EEDKERPDVTPKLRQ) are enriched in basic and acidic residues. A phosphoserine mark is found at S1075 and S1096. The span at 1099–1112 (SQQRASQEQRASQE) shows a compositional bias: low complexity. Position 1115 is a phosphoserine (S1115). Over residues 1178 to 1197 (GTSTAEQNSGKQDATVQTER) the composition is skewed to polar residues. Position 1211 is a phosphothreonine (T1211). 2 positions are modified to phosphoserine: S1213 and S1216. Over residues 1269 to 1282 (ETEEPIVECQECET) the composition is skewed to acidic residues. A compositionally biased stretch (low complexity) spans 1295-1326 (DLGDISSFSSKASSSHHTSSGTSLSAIHSSGS). Residue S1314 is modified to Phosphoserine. Omega-N-methylarginine is present on R1329. Position 1339 is a phosphoserine (S1339). R1352 carries the post-translational modification Omega-N-methylarginine. S1359 carries the post-translational modification Phosphoserine. K1362 is covalently cross-linked (Glycyl lysine isopeptide (Lys-Gly) (interchain with G-Cter in SUMO2)). The residue at position 1365 (S1365) is a Phosphoserine. Positions 1393 to 1400 (RGRGRRGR) match the GAR motif. S1423 and S1427 each carry phosphoserine. K1431 participates in a covalent cross-link: Glycyl lysine isopeptide (Lys-Gly) (interchain with G-Cter in SUMO1); alternate. K1431 is covalently cross-linked (Glycyl lysine isopeptide (Lys-Gly) (interchain with G-Cter in SUMO2); alternate). S1457, S1459, S1470, and S1471 each carry phosphoserine. The segment covering 1469-1478 (GSSDGLDSSS) has biased composition (low complexity). The tract at residues 1481 to 1600 (NSFVGLRVVA…NRLREQYGLG (120 aa)) is tudor-like. Positions 1492-1520 (WSSNGYFYSGKITRDVGAGKYKLLFDDGY) are interaction with dimethylated histone H4. K1560 participates in a covalent cross-link: Glycyl lysine isopeptide (Lys-Gly) (interchain with G-Cter in SUMO1); alternate. A Glycyl lysine isopeptide (Lys-Gly) (interchain with G-Cter in SUMO2); alternate cross-link involves residue K1560. The UDR signature appears at 1601–1628 (PYEAVTPLTKAADISLDNLVEGKRKRRS). T1606 carries the post-translational modification Phosphothreonine. A phosphoserine mark is found at S1615, S1628, and S1632. Positions 1624-1715 (RKRRSNISSP…IGEPSVLEEP (92 aa)) are disordered. Over residues 1631-1648 (SSPVTPTAASSSSTTPTR) the composition is skewed to low complexity. T1635 and T1645 each carry phosphothreonine. S1653, S1670, and S1675 each carry phosphoserine. K1682 participates in a covalent cross-link: Glycyl lysine isopeptide (Lys-Gly) (interchain with G-Cter in ubiquitin). Phosphoserine occurs at positions 1698 and 1756. BRCT domains are found at residues 1749–1845 (LDGP…NYLL) and 1861–1961 (PREN…QHPK).

Homoligomer. Interacts with p53/TP53 (via the central domain). Interacts with DCLRE1C. Interacts with histone H2AX and this requires phosphorylation of H2AX on 'Ser-139'. Interacts with histone H4 that has been dimethylated at 'Lys-20' (H4K20me2). Has low affinity for histone H4 containing monomethylated 'Lys-20' (H4K20me1). Does not bind histone H4 containing unmethylated or trimethylated 'Lys-20' (H4K20me3). Has low affinity for histone H3 that has been dimethylated on 'Lys-79'. Has very low affinity for histone H3 that has been monomethylated on 'Lys-79' (in vitro). Does not bind unmethylated histone H3. Interacts with histone H2A monoubiquitinated at 'Lys-15' (H2AK15Ub). Interacts with PWWP3A/EXPAND1. Interacts with CHEK2; modulates CHEK2 phosphorylation at 'Thr-68' in response to infrared. Interacts with MSL1; this interaction may be required for MSL1 DNA repair activity, but not for histone acetyltransferase activity. Interacts (when phosphorylated by ATM) with RIF1. Interacts (via the Tudor-like domain) with NUDT16L1/TIRR; interaction masks the Tudor-like domain and prevents recruitment to chromatin. Interacts with PAXIP1. Interacts with IFI202A. Interacts with SHLD2. Interacts (when phosphorylated) with TOPBP1. Interacts with GFI1; promoting methylation by PRMT1. Interacts with (phosphorylated) DYNLL1; specifically binds DYNLL1 phosphorylated at 'Ser-88' and promotes its recruitment to double stand breaks (DSBs). In terms of processing, phosphorylated at basal level in the absence of DNA damage. Phosphorylated by ATM in response to DNA damage: phosphorylation at different sites promotes interaction with different set of proteins: phosphorylation at the N-terminus by ATM (residues from 11-181) promotes interaction with PAXIP1 and non-homologous end joining (NHEJ) of dysfunctional telomeres. Phosphorylation by ATM at residues that are located more C-terminus (residues 300-650) leads to promote interaction with RIF1. Interaction with RIF1 leads to disrupt interaction with NUDT16L1/TIRR. Phosphorylation at Thr-1606 and Ser-1615 in the UDR motif blocks interaction with H2AK15ub. Dephosphorylated by PPP4C. Hyperphosphorylation during mitosis correlates with its exclusion from chromatin and DNA lesions. Hyperphosphorylated in an ATR-dependent manner in response to DNA damage induced by UV irradiation. Dephosphorylated by PPP5C. Phosphorylation at Ser-368 and Thr-662 promotes interaction with TOPBP1. Phosphorylated by VRK1. Asymmetrically dimethylated on Arg residues by PRMT1. Methylation is required for DNA binding. Post-translationally, monoubiquitinated at Lys-1682 by MSL2 is reponse to DNA damage, leading to its stabilization.

The protein localises to the nucleus. It is found in the chromosome. It localises to the centromere. The protein resides in the kinetochore. Its function is as follows. Double-strand break (DSB) repair protein involved in response to DNA damage, telomere dynamics and class-switch recombination (CSR) during antibody genesis. Plays a key role in the repair of double-strand DNA breaks (DSBs) in response to DNA damage by promoting non-homologous end joining (NHEJ)-mediated repair of DSBs and specifically counteracting the function of the homologous recombination (HR) repair protein BRCA1. In response to DSBs, phosphorylation by ATM promotes interaction with RIF1 and dissociation from NUDT16L1/TIRR, leading to recruitment to DSBs sites. Recruited to DSBs sites by recognizing and binding histone H2A monoubiquitinated at 'Lys-15' (H2AK15Ub) and histone H4 dimethylated at 'Lys-20' (H4K20me2), two histone marks that are present at DSBs sites. Required for immunoglobulin class-switch recombination (CSR) during antibody genesis, a process that involves the generation of DNA DSBs. Participates in the repair and the orientation of the broken DNA ends during CSR. In contrast, it is not required for classic NHEJ and V(D)J recombination. Promotes NHEJ of dysfunctional telomeres. This Mus musculus (Mouse) protein is TP53-binding protein 1.